Here is an 88-residue protein sequence, read N- to C-terminus: Small ribosomal subunit protein uS15c (88 aa).

This sequence belongs to the universal ribosomal protein uS15 family. Part of the 30S ribosomal subunit.

It is found in the plastid. The protein resides in the chloroplast. The polypeptide is Small ribosomal subunit protein uS15c (rps15) (Capsella bursa-pastoris (Shepherd's purse)).